The sequence spans 839 residues: MLSLKSRGSWNVLRWIQVPRRTAVIPAKPSPMRRKRRRIKNVSSKDLDLRGIDPQDSRALEFKVKQLQEFTRNLKEQFKLADSNTKKLEAEEELAKSIPEDDDKRADELFGKLEAPAFEKPLPQPNLSTLILSAENQQLKKLIPVEIKERINDDGFLLARLIDKDNQNWNDIISKLYTTEKRLSDISMPIISSGILRKVKNLSYENIEKLDIMLLETKNGDITCFNRLMYETLLLNLSNLRPPTSGEEDKVTMKMRQLLERYDKSKEISPDVPSKMTQFSLNCCLKYSTKSVSFENMEYFLSKFKNDYGITPNRENYTTVIQFYVKFGVSKQAWDVFDTMKFLSSSHAPDVTTYNSVLHLCNRERDYAKAIDLYEEMLDRQLQPSIQTLNIMAKTMARASADNVISEGKADSLRLLGWKYIHTLESTFDHTKHETHFYHTLEAMMALAAYDGDVGFARALYYKYTTRKYKEVVKYWKGKFDSQKIWQTALDPQLFNLLLLAYANFRPNKLPILLGYEKGIKLRRNILNSVDYAGRYDLDDEIKVQLPMLPISDMNQAWQILAESRALWQFNLEFGGYYDLRDTPEGFDTTRLQEMVSKSATQDELQFNILHQVSQWKFQLVNHSILNPKSLTTFLTIPIKNGDRIEFMLRLKEFTFQQNDLESRIEKLYKGLKLVESRVEPNSHERDLAINQIEMDENVKWFASMKHKIVAKNYIYELMMKAASAFKDSAISKDAWQSRGEYRKTKLFQQMDSKRRIESDTQFAALMVQFFARQNMLTDALAIVMSTRKFIDWKYHMVKGLHEGLVKLEDEKSISILLDIVNKKSSIELLDEKIRDFQL.

The transit peptide at 1-59 (MLSLKSRGSWNVLRWIQVPRRTAVIPAKPSPMRRKRRRIKNVSSKDLDLRGIDPQDSRA) directs the protein to the mitochondrion. PPR repeat units lie at residues 313–347 (NRENYTTVIQFYVKFGVSKQAWDVFDTMKFLSSSH) and 350–384 (DVTTYNSVLHLCNRERDYAKAIDLYEEMLDRQLQP).

The protein belongs to the CCM1 family. As to quaternary structure, binds to mitochondrial small subunit 15S rRNA.

Its subcellular location is the mitochondrion. Functionally, regulates mitochondrial small subunit maturation by controlling 15S rRNA 5'-end processing. Localizes to the 5' precursor of the 15S rRNA in a position that is subsequently occupied by mS47 in the mature yeast mtSSU. Uses structure and sequence-specific RNA recognition, binding to a single-stranded region of the precursor and specifically recognizing bases -6 to -1. The exchange of Ccm1 for mS47 is coupled to the irreversible removal of precursor rRNA that is accompanied by conformational changes of the mitoribosomal proteins uS5m and mS26. These conformational changes signal completion of 5'-end rRNA processing through protection of the mature 5'-end of the 15S rRNA and stabilization of mS47. The removal of the 5' precursor together with the dissociation of Ccm1 may be catalyzed by the 5'-3' exoribonuclease Pet127. Involved in the specific removal of group I introns in mitochondrial encoded transcripts. The chain is Mitochondrial 15S rRNA processing factor CCM1 (CCM1) from Zygosaccharomyces rouxii (strain ATCC 2623 / CBS 732 / NBRC 1130 / NCYC 568 / NRRL Y-229).